The primary structure comprises 130 residues: Small ribosomal subunit protein uS9 (130 aa).

Belongs to the universal ribosomal protein uS9 family.

The protein is Small ribosomal subunit protein uS9 (rpsI) of Haemophilus influenzae (strain ATCC 51907 / DSM 11121 / KW20 / Rd).